The following is a 453-amino-acid chain: tRNA modification GTPase MnmE (453 aa).

(6S)-5-formyl-5,6,7,8-tetrahydrofolate is bound by residues Arg22, Glu79, and Lys119. The 162-residue stretch at 215-376 folds into the TrmE-type G domain; the sequence is GMKVVIAGRP…LKAHLKSLMG (162 aa). Residue Asn225 participates in K(+) binding. Residues 225–230, 244–250, 269–272, and 334–337 contribute to the GTP site; these read NAGKSS, TEIAGTT, DTAG, and NKAD. Ser229 serves as a coordination point for Mg(2+). K(+) contacts are provided by Thr244, Ile246, and Thr249. Thr250 serves as a coordination point for Mg(2+). Lys453 is a binding site for (6S)-5-formyl-5,6,7,8-tetrahydrofolate.

The protein belongs to the TRAFAC class TrmE-Era-EngA-EngB-Septin-like GTPase superfamily. TrmE GTPase family. As to quaternary structure, homodimer. Heterotetramer of two MnmE and two MnmG subunits. K(+) is required as a cofactor.

The protein localises to the cytoplasm. In terms of biological role, exhibits a very high intrinsic GTPase hydrolysis rate. Involved in the addition of a carboxymethylaminomethyl (cmnm) group at the wobble position (U34) of certain tRNAs, forming tRNA-cmnm(5)s(2)U34. This is tRNA modification GTPase MnmE from Shewanella loihica (strain ATCC BAA-1088 / PV-4).